Reading from the N-terminus, the 434-residue chain is Tryptophan synthase beta chain 2 (434 aa).

Lys110 bears the N6-(pyridoxal phosphate)lysine mark.

The protein belongs to the TrpB family. In terms of assembly, tetramer of two alpha and two beta chains. Pyridoxal 5'-phosphate is required as a cofactor.

The catalysed reaction is (1S,2R)-1-C-(indol-3-yl)glycerol 3-phosphate + L-serine = D-glyceraldehyde 3-phosphate + L-tryptophan + H2O. Its pathway is amino-acid biosynthesis; L-tryptophan biosynthesis; L-tryptophan from chorismate: step 5/5. Its function is as follows. The beta subunit is responsible for the synthesis of L-tryptophan from indole and L-serine. The sequence is that of Tryptophan synthase beta chain 2 (trpB2) from Aquifex aeolicus (strain VF5).